A 180-amino-acid chain; its full sequence is Ribulose bisphosphate carboxylase small subunit, chloroplastic 2 (180 aa).

Residues M1–S56 constitute a chloroplast transit peptide.

This sequence belongs to the RuBisCO small chain family. As to quaternary structure, heterohexadecamer of 8 large and 8 small subunits. In terms of assembly, (Microbial infection) Binds to tobamovirus movement protein; this interaction seems required for viral systemic movement.

It localises to the plastid. The protein localises to the chloroplast. It is found in the cell junction. Its subcellular location is the plasmodesma. RuBisCO catalyzes two reactions: the carboxylation of D-ribulose 1,5-bisphosphate, the primary event in carbon dioxide fixation, as well as the oxidative fragmentation of the pentose substrate. Both reactions occur simultaneously and in competition at the same active site. Although the small subunit is not catalytic it is essential for maximal activity. Involved in antiviral defenses. The sequence is that of Ribulose bisphosphate carboxylase small subunit, chloroplastic 2 from Solanum lycopersicum (Tomato).